A 1041-amino-acid chain; its full sequence is Protein SMAX1-like (1041 aa).

A Clp R domain is found at 8–188; that stretch reads IQQTLTPEAA…KSIIEQSLSA (181 aa). Repeat stretches follow at residues 12–98 and 117–188; these read LTPE…LDRL and VSNA…SLSA. Over residues 189–205 the composition is skewed to low complexity; it reads PSPCPSAAASTTTAGPG. Disordered stretches follow at residues 189–214, 482–513, and 889–913; these read PSPC…PSPL, EAEQ…QNKA, and EGSH…VKRS. Over residues 482–495 the composition is skewed to basic and acidic residues; sequence EAEQTDKPASRPEA. The span at 891–900 shows a compositional bias: polar residues; it reads SHNSSDVSVE.

The protein belongs to the ClpA/ClpB family.

Functionally, may act downstream of MAX2 to negatively regulate karrikins/strigolactone responses. Acts probably specifically in the karrikin pathway. May function in a transcriptional corepressor complex. The polypeptide is Protein SMAX1-like (Oryza sativa subsp. japonica (Rice)).